The following is a 278-amino-acid chain: MANYTAADIKALRERTGAGMMDVKKALDEANGDAEKAIEIIRIKGLKGATKREGRSTAEGLVAAKVAGGVGVMIEVNCETDFVAKADKFIQLADKVLAVAVESGAADIETLLATEVDGKPLSEVVVEEGAILGEKVVVRRISRLEGGTVDAYLHKTSKDLPAQVGVLFAVDGEGEAAATAAHDVAVHIAAMAPNYLTREDVPADLVESERRIAEETAKAEGKPEAAMTKIVEGRVTGFYKGEVLVDQAFAKDAKKSVAQVLEEAGVKGTAFARFRVGS.

Positions Thr80–Val83 are involved in Mg(2+) ion dislocation from EF-Tu.

Belongs to the EF-Ts family.

It localises to the cytoplasm. Functionally, associates with the EF-Tu.GDP complex and induces the exchange of GDP to GTP. It remains bound to the aminoacyl-tRNA.EF-Tu.GTP complex up to the GTP hydrolysis stage on the ribosome. The protein is Elongation factor Ts of Arthrobacter sp. (strain FB24).